A 403-amino-acid chain; its full sequence is Betaine--homocysteine S-methyltransferase 1 (403 aa).

The 304-residue stretch at 8-311 (KGLLERLDAG…YHTRAIAEEL (304 aa)) folds into the Hcy-binding domain. Residues Cys-214, Cys-296, and Cys-297 each contribute to the Zn(2+) site.

Homotetramer. It depends on Zn(2+) as a cofactor.

It is found in the cytoplasm. It catalyses the reaction L-homocysteine + glycine betaine = N,N-dimethylglycine + L-methionine. Its pathway is amine and polyamine degradation; betaine degradation; sarcosine from betaine: step 1/2. It participates in amino-acid biosynthesis; L-methionine biosynthesis via de novo pathway; L-methionine from L-homocysteine (BhmT route): step 1/1. In terms of biological role, involved in the regulation of homocysteine metabolism. Converts betaine and homocysteine to dimethylglycine and methionine, respectively. This reaction is also required for the irreversible oxidation of choline. The polypeptide is Betaine--homocysteine S-methyltransferase 1 (bhmt) (Xenopus tropicalis (Western clawed frog)).